The sequence spans 405 residues: Riboflavin biosynthesis protein RibBA (405 aa).

The DHBP synthase stretch occupies residues 1 to 205 (MSEIQLNTIE…IKDLIAYRLR (205 aa)). D-ribulose 5-phosphate contacts are provided by residues 30 to 31 (RE), Asp35, 144 to 148 (RAGHT), and Glu168. A Mg(2+)-binding site is contributed by Glu31. His147 lines the Mg(2+) pocket. Residues 206-405 (TESIVENGVE…RMGHVLHNIK (200 aa)) form a GTP cyclohydrolase II region. 256 to 260 (RVHSS) contributes to the GTP binding site. Zn(2+) is bound by residues Cys261, Cys272, and Cys274. GTP is bound by residues Gln277, 299–301 (EGR), and Thr321. Asp333 functions as the Proton acceptor; for GTP cyclohydrolase activity in the catalytic mechanism. The active-site Nucleophile; for GTP cyclohydrolase activity is the Arg335. GTP is bound by residues Ser356 and Lys361.

It in the N-terminal section; belongs to the DHBP synthase family. This sequence in the C-terminal section; belongs to the GTP cyclohydrolase II family. Requires Mg(2+) as cofactor. Mn(2+) is required as a cofactor. It depends on Zn(2+) as a cofactor.

The enzyme catalyses D-ribulose 5-phosphate = (2S)-2-hydroxy-3-oxobutyl phosphate + formate + H(+). It catalyses the reaction GTP + 4 H2O = 2,5-diamino-6-hydroxy-4-(5-phosphoribosylamino)-pyrimidine + formate + 2 phosphate + 3 H(+). It participates in cofactor biosynthesis; riboflavin biosynthesis; 2-hydroxy-3-oxobutyl phosphate from D-ribulose 5-phosphate: step 1/1. The protein operates within cofactor biosynthesis; riboflavin biosynthesis; 5-amino-6-(D-ribitylamino)uracil from GTP: step 1/4. In terms of biological role, catalyzes the conversion of D-ribulose 5-phosphate to formate and 3,4-dihydroxy-2-butanone 4-phosphate. Functionally, catalyzes the conversion of GTP to 2,5-diamino-6-ribosylamino-4(3H)-pyrimidinone 5'-phosphate (DARP), formate and pyrophosphate. The sequence is that of Riboflavin biosynthesis protein RibBA from Parabacteroides distasonis (strain ATCC 8503 / DSM 20701 / CIP 104284 / JCM 5825 / NCTC 11152).